The following is a 99-amino-acid chain: Large ribosomal subunit protein uL23 (99 aa).

This sequence belongs to the universal ribosomal protein uL23 family. As to quaternary structure, part of the 50S ribosomal subunit. Contacts protein L29, and trigger factor when it is bound to the ribosome.

Functionally, one of the early assembly proteins it binds 23S rRNA. One of the proteins that surrounds the polypeptide exit tunnel on the outside of the ribosome. Forms the main docking site for trigger factor binding to the ribosome. The chain is Large ribosomal subunit protein uL23 from Magnetococcus marinus (strain ATCC BAA-1437 / JCM 17883 / MC-1).